A 463-amino-acid polypeptide reads, in one-letter code: uncharacterized protein (463 aa).

A run of 12 helical transmembrane segments spans residues 21–40 (DFACNLIYATVSTYLLFFYT), 50–72 (AGTMFLVVRIIDALADPFIGTIV), 84–104 (PYLLFGAFPFVILAILCFTTP), 112–132 (LIYAYITYVGLSLTYTTINVP), 156–176 (LFANLGGLVVAFFVPLLAAYL), 186–206 (GWQLTMGILGMIGGCLLIFCF), 237–257 (LVVLSIFFIIIFGVNSISNSV), 271–291 (LVKWYGLIGSLPALVILPFIP), 311–331 (IIGLLALLFVPPSNVYLILVC), 334–354 (IAAAGSLTAGGYMWALIPETI), 367–387 (GLIYAIIGFFFKFGMALGGVV), and 408–428 (LMGILITTTIIPVFLLVLALI).

This sequence belongs to the sodium:galactoside symporter (TC 2.A.2) family.

It localises to the cell membrane. This is an uncharacterized protein from Bacillus subtilis (strain 168).